A 358-amino-acid polypeptide reads, in one-letter code: MPFTLTLKPKKAKGGQVYYPLQLNVVSKPAPGPNEVLIQLEAAALNHRDFFLRQNLYPGLSFKSPMLSDGCGTVVELGPGCTTASNQLLGKKVILTPFRGWDSDPEGPEDYSNFSTIGGVEPHFDLGMAQNYISVHESEVELLPEHLNHIEGAALPCCGITAWRALVTKSGNAKPGRNILVTGIGGGVAIQTLLFGVAMGCNMYVSSSSDEKLAKARELGAVGTVNYKTDSDSWDKTLGSLLPAERPYLDAVIDGAGGNIVTKALTVLKPGGVIVCYGMTVGPVMDWPMQAALKNVDLRGTMVGSRAEFREMVEFISTHKIKPVISRTVRGLDCVDAIDGLFEDIRTGKQFGKLVIEI.

The protein belongs to the zinc-containing alcohol dehydrogenase family. Quinone oxidoreductase subfamily.

Its pathway is secondary metabolite biosynthesis. Functionally, zinc-type alcohol dehydrogenase-like protein; part of the gene cluster that mediates the biosynthesis of phomenoic acid, a long chain aliphatic carboxylic acid that does not appear to be essential for pathogenicity but may play a role in allowing to outcompete other fungi in the environmental niche via its antifungal properties. The polyketide synthase produces the long methylated aliphatic carboxylic acid chain of phomenoic acid. The cluster-specific cytochrome P450 monooxygenase may then hydroxylate the methyl group of carbon 31. The putative dehydrogenase YogA, which has no obvious role in phomenoic acid biosynthesis, may further modify phomenoic acid to produce a compound not identified yet. The polypeptide is Zinc-type alcohol dehydrogenase-like protein YogA (Leptosphaeria maculans (strain JN3 / isolate v23.1.3 / race Av1-4-5-6-7-8) (Blackleg fungus)).